We begin with the raw amino-acid sequence, 104 residues long: Replication restart protein PriB (104 aa).

The SSB domain maps to 1 to 101; sequence MTNRLVLSGT…LHAEQIDLID (101 aa).

This sequence belongs to the PriB family. As to quaternary structure, homodimer. Interacts with PriA and DnaT. Component of the replication restart primosome. Primosome assembly occurs via a 'hand-off' mechanism. PriA binds to replication forks, subsequently PriB then DnaT bind; DnaT then displaces ssDNA to generate the helicase loading substrate.

Functionally, involved in the restart of stalled replication forks, which reloads the replicative helicase on sites other than the origin of replication; the PriA-PriB pathway is the major replication restart pathway. During primosome assembly it facilitates complex formation between PriA and DnaT on DNA; stabilizes PriA on DNA. Stimulates the DNA unwinding activity of PriA helicase. In Enterobacter sp. (strain 638), this protein is Replication restart protein PriB.